A 140-amino-acid polypeptide reads, in one-letter code: MNPVTVFFVVVVTVAVCMILFQVYSIYLNYDNIKEFNAMHSPLEYSKMVNVTAIDRRVQDANDDIYDAKQKWRCVKFDDSYVSLSMFGYKADGVGIRRFRTLNGCIDYTFSTSTHSSILNPCIPPNDPKSRECTFLKSAL.

The helical; Signal-anchor for type II membrane protein transmembrane segment at 1–21 (MNPVTVFFVVVVTVAVCMILF) threads the bilayer. Residues 22–140 (QVYSIYLNYD…RECTFLKSAL (119 aa)) lie on the Virion surface side of the membrane.

The protein belongs to the poxviridae A28 protein family. Contains two intramolecular disulfide bonds. They are created by the viral disulfide bond formation pathway, a poxvirus-specific pathway that operates on the cytoplasmic side of the MV membranes.

The protein resides in the virion membrane. In terms of biological role, envelope protein required for virus entry into host cell and for cell-cell fusion (syncytium formation). This Myxoma virus (strain Lausanne) (MYXV) protein is Envelope protein A28 homolog.